Reading from the N-terminus, the 369-residue chain is Nuclear pore complex-interacting protein family member A6 (369 aa).

A disordered region spans residues 151 to 170 (SMKEREHGEKERQVSEAEEN).

Belongs to the NPIP family.

The polypeptide is Nuclear pore complex-interacting protein family member A6 (Homo sapiens (Human)).